The following is a 904-amino-acid chain: Nitrate reductase [NADH] 1 (904 aa).

Composition is skewed to polar residues over residues 1–10 (MAASVENRQF) and 39–50 (STNFQKKPNSTI). Residues 1–65 (MAASVENRQF…SSEDDDDDDE (65 aa)) form a disordered region. A compositionally biased stretch (acidic residues) spans 56 to 65 (SSEDDDDDDE). Cys183 provides a ligand contact to Mo-molybdopterin. In terms of domain architecture, Cytochrome b5 heme-binding spans 531 to 606 (SKMYSMSEVR…LEEFRIGELL (76 aa)). Positions 566 and 589 each coordinate heme. The 113-residue stretch at 647–759 (REKIPCKLID…KGPLGHIEYQ (113 aa)) folds into the FAD-binding FR-type domain. FAD-binding positions include 699 to 702 (RAYT), 716 to 720 (VVKIY), Phe721, Phe728, 733 to 735 (QMS), and Thr786.

It belongs to the nitrate reductase family. In terms of assembly, homodimer. The cofactor is FAD. Requires heme as cofactor. Mo-molybdopterin serves as cofactor.

The enzyme catalyses nitrite + NAD(+) + H2O = nitrate + NADH + H(+). Its activity is regulated as follows. Regulated by the nitrogen source and controlled by the circadian rhythm. Functionally, nitrate reductase is a key enzyme involved in the first step of nitrate assimilation in plants, fungi and bacteria. The sequence is that of Nitrate reductase [NADH] 1 (NIA1) from Nicotiana tabacum (Common tobacco).